Here is a 558-residue protein sequence, read N- to C-terminus: S-layer protein (558 aa).

The N-terminal stretch at 1-28 (MAMSLKKIGAIAVGGAMVATALASGVAA) is a signal peptide. N-linked (GlcNAc...) asparagine glycosylation is found at N112, N138, N158, N197, N226, N291, and N374.

This sequence belongs to the Mj S-layer protein family.

It is found in the secreted. It localises to the cell wall. Its subcellular location is the S-layer. Functionally, S-layer protein. The S-layer is a paracrystalline mono-layered assembly of proteins which coat the surface of the cell. The polypeptide is S-layer protein (sla) (Methanocaldococcus jannaschii (strain ATCC 43067 / DSM 2661 / JAL-1 / JCM 10045 / NBRC 100440) (Methanococcus jannaschii)).